We begin with the raw amino-acid sequence, 470 residues long: tRNA-2-methylthio-N(6)-dimethylallyladenosine synthase (470 aa).

Positions P20–S138 constitute an MTTase N-terminal domain. Positions 29, 65, 99, 176, 180, and 183 each coordinate [4Fe-4S] cluster. Residues R162–A398 form the Radical SAM core domain. In terms of domain architecture, TRAM spans E401–E464.

It belongs to the methylthiotransferase family. MiaB subfamily. As to quaternary structure, monomer. It depends on [4Fe-4S] cluster as a cofactor.

The protein localises to the cytoplasm. It catalyses the reaction N(6)-dimethylallyladenosine(37) in tRNA + (sulfur carrier)-SH + AH2 + 2 S-adenosyl-L-methionine = 2-methylsulfanyl-N(6)-dimethylallyladenosine(37) in tRNA + (sulfur carrier)-H + 5'-deoxyadenosine + L-methionine + A + S-adenosyl-L-homocysteine + 2 H(+). Catalyzes the methylthiolation of N6-(dimethylallyl)adenosine (i(6)A), leading to the formation of 2-methylthio-N6-(dimethylallyl)adenosine (ms(2)i(6)A) at position 37 in tRNAs that read codons beginning with uridine. The chain is tRNA-2-methylthio-N(6)-dimethylallyladenosine synthase from Symbiobacterium thermophilum (strain DSM 24528 / JCM 14929 / IAM 14863 / T).